A 318-amino-acid chain; its full sequence is AT-hook motif nuclear-localized protein 7 (318 aa).

2 disordered regions span residues Met-1–Ser-76 and Ser-241–Asp-318. The short motif at Lys-56–Lys-64 is the Bipartite nuclear localization signal element. Residues Lys-56 to Asn-68 constitute a DNA-binding region (a.T hook). The 140-residue stretch at Gly-120 to Ala-259 folds into the PPC domain. Basic and acidic residues predominate over residues Gln-243–His-256. A compositionally biased stretch (pro residues) spans Val-264–Ala-274. The segment covering Pro-288–Asn-312 has biased composition (polar residues).

It localises to the nucleus. In terms of biological role, transcription factor that specifically binds AT-rich DNA sequences related to the nuclear matrix attachment regions (MARs). This Arabidopsis thaliana (Mouse-ear cress) protein is AT-hook motif nuclear-localized protein 7.